The chain runs to 447 residues: Cytochrome c biogenesis protein CcsB (447 aa).

3 helical membrane-spanning segments follow: residues 28-48, 87-107, and 173-193; these read LRLAIILLLLIAIFSISGTVI, TWWYLSLLILFGSSLTACTFR, and IGPIIVHAAMLIILAGAIWGA.

It belongs to the Ccs1/CcsB family. May interact with CcsA.

The protein resides in the cellular thylakoid membrane. Required during biogenesis of c-type cytochromes (cytochrome c6 and cytochrome f) at the step of heme attachment. This chain is Cytochrome c biogenesis protein CcsB, found in Microcystis aeruginosa (strain NIES-843 / IAM M-2473).